Here is a 450-residue protein sequence, read N- to C-terminus: Interferon-induced protein 75 (450 aa).

Positions 1–108 constitute an HSR domain; that stretch reads MFTLTKALEK…IFRSFRNVGY (108 aa). Disordered stretches follow at residues 131–156 and 170–225; these read CSLQ…APRV and LDEQ…VKDD. Residues 143-154 show a composition bias toward low complexity; it reads QLSLPSHLSSAP. Phosphoserine occurs at positions 175 and 177. Residues 197–212 show a composition bias toward basic and acidic residues; it reads SRDHQRKDKEDSREMP. The residue at position 226 (S226) is a Phosphoserine. 2 disordered regions span residues 238–283 and 318–360; these read VLCT…HGVQ and AQTS…KNDA. Over residues 245 to 267 the composition is skewed to basic residues; that stretch reads KKARRKKRLNWSNSKRGRQKKKP. The Nuclear localization signal signature appears at 251–266; sequence KRLNWSNSKRGRQKKK. Positions 343–353 are enriched in polar residues; sequence TSTAGKTTQVP. Positions 358–439 constitute an SAND domain; sequence NDAVDFLSPT…RQLEQKGLLF (82 aa).

The protein localises to the nucleus. This Mus caroli (Ryukyu mouse) protein is Interferon-induced protein 75 (Ifi75).